We begin with the raw amino-acid sequence, 329 residues long: Malate dehydrogenase (329 aa).

An NAD(+)-binding site is contributed by 11-17 (GAAGQIG). 2 residues coordinate substrate: Arg92 and Arg98. NAD(+) contacts are provided by residues Asn105, Gln112, and 129–131 (VGN). Substrate is bound by residues Asn131 and Arg165. His190 (proton acceptor) is an active-site residue.

This sequence belongs to the LDH/MDH superfamily. MDH type 2 family.

The enzyme catalyses (S)-malate + NAD(+) = oxaloacetate + NADH + H(+). Its function is as follows. Catalyzes the reversible oxidation of malate to oxaloacetate. The chain is Malate dehydrogenase from Laribacter hongkongensis (strain HLHK9).